The following is a 247-amino-acid chain: Cell division protein ZapD (247 aa).

It belongs to the ZapD family. Interacts with FtsZ.

It localises to the cytoplasm. In terms of biological role, cell division factor that enhances FtsZ-ring assembly. Directly interacts with FtsZ and promotes bundling of FtsZ protofilaments, with a reduction in FtsZ GTPase activity. The chain is Cell division protein ZapD from Shigella boydii serotype 4 (strain Sb227).